The primary structure comprises 335 residues: Glycerol-3-phosphate dehydrogenase [NAD(P)+] (335 aa).

Positions 10, 11, 31, and 105 each coordinate NADPH. The sn-glycerol 3-phosphate site is built by K105, G136, and S138. A140 contributes to the NADPH binding site. Sn-glycerol 3-phosphate is bound by residues K191, D244, S254, R255, and N256. Residue K191 is the Proton acceptor of the active site. Position 255 (R255) interacts with NADPH. NADPH contacts are provided by V279 and E281.

Belongs to the NAD-dependent glycerol-3-phosphate dehydrogenase family.

It localises to the cytoplasm. The catalysed reaction is sn-glycerol 3-phosphate + NAD(+) = dihydroxyacetone phosphate + NADH + H(+). It catalyses the reaction sn-glycerol 3-phosphate + NADP(+) = dihydroxyacetone phosphate + NADPH + H(+). It participates in membrane lipid metabolism; glycerophospholipid metabolism. Functionally, catalyzes the reduction of the glycolytic intermediate dihydroxyacetone phosphate (DHAP) to sn-glycerol 3-phosphate (G3P), the key precursor for phospholipid synthesis. In Myxococcus xanthus (strain DK1622), this protein is Glycerol-3-phosphate dehydrogenase [NAD(P)+].